Here is a 338-residue protein sequence, read N- to C-terminus: Ketol-acid reductoisomerase (NADP(+)) (338 aa).

The 181-residue stretch at 1–181 (MKVYYDKDAD…GGGKAGIIET (181 aa)) folds into the KARI N-terminal Rossmann domain. Residues 24–27 (YGSQ), Arg-47, and Ser-52 contribute to the NADP(+) site. The active site involves His-107. Gly-133 is an NADP(+) binding site. Positions 182-327 (NFREETETDL…EKLRAMMPWI (146 aa)) constitute a KARI C-terminal knotted domain. The Mg(2+) site is built by Asp-190, Glu-194, Glu-226, and Glu-230. Ser-251 serves as a coordination point for substrate.

This sequence belongs to the ketol-acid reductoisomerase family. Mg(2+) is required as a cofactor.

It catalyses the reaction (2R)-2,3-dihydroxy-3-methylbutanoate + NADP(+) = (2S)-2-acetolactate + NADPH + H(+). The enzyme catalyses (2R,3R)-2,3-dihydroxy-3-methylpentanoate + NADP(+) = (S)-2-ethyl-2-hydroxy-3-oxobutanoate + NADPH + H(+). The protein operates within amino-acid biosynthesis; L-isoleucine biosynthesis; L-isoleucine from 2-oxobutanoate: step 2/4. Its pathway is amino-acid biosynthesis; L-valine biosynthesis; L-valine from pyruvate: step 2/4. Involved in the biosynthesis of branched-chain amino acids (BCAA). Catalyzes an alkyl-migration followed by a ketol-acid reduction of (S)-2-acetolactate (S2AL) to yield (R)-2,3-dihydroxy-isovalerate. In the isomerase reaction, S2AL is rearranged via a Mg-dependent methyl migration to produce 3-hydroxy-3-methyl-2-ketobutyrate (HMKB). In the reductase reaction, this 2-ketoacid undergoes a metal-dependent reduction by NADPH to yield (R)-2,3-dihydroxy-isovalerate. The polypeptide is Ketol-acid reductoisomerase (NADP(+)) (Methylibium petroleiphilum (strain ATCC BAA-1232 / LMG 22953 / PM1)).